Reading from the N-terminus, the 172-residue chain is 3-hydroxydecanoyl-[acyl-carrier-protein] dehydratase (172 aa).

Residue histidine 71 is part of the active site.

This sequence belongs to the thioester dehydratase family. FabA subfamily. In terms of assembly, homodimer.

It localises to the cytoplasm. It catalyses the reaction a (3R)-hydroxyacyl-[ACP] = a (2E)-enoyl-[ACP] + H2O. The enzyme catalyses (3R)-hydroxydecanoyl-[ACP] = (2E)-decenoyl-[ACP] + H2O. It carries out the reaction (2E)-decenoyl-[ACP] = (3Z)-decenoyl-[ACP]. It functions in the pathway lipid metabolism; fatty acid biosynthesis. Functionally, necessary for the introduction of cis unsaturation into fatty acids. Catalyzes the dehydration of (3R)-3-hydroxydecanoyl-ACP to E-(2)-decenoyl-ACP and then its isomerization to Z-(3)-decenoyl-ACP. Can catalyze the dehydratase reaction for beta-hydroxyacyl-ACPs with saturated chain lengths up to 16:0, being most active on intermediate chain length. This chain is 3-hydroxydecanoyl-[acyl-carrier-protein] dehydratase, found in Salmonella choleraesuis (strain SC-B67).